The primary structure comprises 162 residues: Protein NrdI (162 aa).

This sequence belongs to the NrdI family.

Its function is as follows. Probably involved in ribonucleotide reductase function. This chain is Protein NrdI, found in Streptococcus pyogenes serotype M28 (strain MGAS6180).